Reading from the N-terminus, the 259-residue chain is Tryptophan synthase alpha chain (259 aa).

Active-site proton acceptor residues include Glu35 and Asp46.

The protein belongs to the TrpA family. In terms of assembly, tetramer of two alpha and two beta chains.

It carries out the reaction (1S,2R)-1-C-(indol-3-yl)glycerol 3-phosphate + L-serine = D-glyceraldehyde 3-phosphate + L-tryptophan + H2O. The protein operates within amino-acid biosynthesis; L-tryptophan biosynthesis; L-tryptophan from chorismate: step 5/5. Functionally, the alpha subunit is responsible for the aldol cleavage of indoleglycerol phosphate to indole and glyceraldehyde 3-phosphate. The chain is Tryptophan synthase alpha chain from Methanococcus maripaludis (strain C7 / ATCC BAA-1331).